A 52-amino-acid chain; its full sequence is ATP synthase protein 8 (52 aa).

Residues 6-26 form a helical membrane-spanning segment; it reads PLLWLNLFLMFSATFVMFIVL.

This sequence belongs to the ATPase protein 8 family. As to quaternary structure, F-type ATPases have 2 components, CF(1) - the catalytic core - and CF(0) - the membrane proton channel.

It is found in the mitochondrion membrane. Mitochondrial membrane ATP synthase (F(1)F(0) ATP synthase or Complex V) produces ATP from ADP in the presence of a proton gradient across the membrane which is generated by electron transport complexes of the respiratory chain. F-type ATPases consist of two structural domains, F(1) - containing the extramembraneous catalytic core and F(0) - containing the membrane proton channel, linked together by a central stalk and a peripheral stalk. During catalysis, ATP synthesis in the catalytic domain of F(1) is coupled via a rotary mechanism of the central stalk subunits to proton translocation. Part of the complex F(0) domain. Minor subunit located with subunit a in the membrane. The sequence is that of ATP synthase protein 8 (MT-ATP8) from Penaeus monodon (Giant tiger prawn).